Here is an 833-residue protein sequence, read N- to C-terminus: Mannosyl-oligosaccharide glucosidase (833 aa).

Topologically, residues 1-10 (MLISKSKMFK) are cytoplasmic. The helical; Signal-anchor for type II membrane protein transmembrane segment at 11–28 (TFWILTSIVLLASATVDI) threads the bilayer. At 29 to 833 (SKLQEFEEYQ…ALVVNILGRF (805 aa)) the chain is on the lumenal side. Asn42 and Asn122 together coordinate substrate. 3 N-linked (GlcNAc...) asparagine glycosylation sites follow: Asn42, Asn122, and Asn135. Glu143 provides a ligand contact to substrate. The active-site Proton donor is Asp601. An intrachain disulfide couples Cys669 to Cys685. A glycan (N-linked (GlcNAc...) asparagine) is linked at Asn787. Glu804 functions as the Proton acceptor in the catalytic mechanism.

It belongs to the glycosyl hydrolase 63 family. Post-translationally, N-glycosylated.

The protein localises to the endoplasmic reticulum membrane. It carries out the reaction N(4)-(alpha-D-Glc-(1-&gt;2)-alpha-D-Glc-(1-&gt;3)-alpha-D-Glc-(1-&gt;3)-alpha-D-Man-(1-&gt;2)-alpha-D-Man-(1-&gt;2)-alpha-D-Man-(1-&gt;3)-[alpha-D-Man-(1-&gt;2)-alpha-D-Man-(1-&gt;3)-[alpha-D-Man-(1-&gt;2)-alpha-D-Man-(1-&gt;6)]-alpha-D-Man-(1-&gt;6)]-beta-D-Man-(1-&gt;4)-beta-D-GlcNAc-(1-&gt;4)-beta-D-GlcNAc)-L-asparaginyl-[protein] + H2O = N(4)-(alpha-D-Glc-(1-&gt;3)-alpha-D-Glc-(1-&gt;3)-alpha-D-Man-(1-&gt;2)-alpha-D-Man-(1-&gt;2)-alpha-D-Man-(1-&gt;3)-[alpha-D-Man-(1-&gt;2)-alpha-D-Man-(1-&gt;3)-[alpha-D-Man-(1-&gt;2)-alpha-D-Man-(1-&gt;6)]-alpha-D-Man-(1-&gt;6)]-beta-D-Man-(1-&gt;4)-beta-D-GlcNAc-(1-&gt;4)-beta-D-GlcNAc)-L-asparaginyl-[protein] + beta-D-glucose. Its pathway is glycan metabolism; N-glycan degradation. Its activity is regulated as follows. Miglitol is an effective inhibitor at 1 mM. Functionally, cleaves the distal alpha 1,2-linked glucose residue from the Glc(3)Man(9)GlcNAc(2) oligosaccharide precursor highly specifically. Seems to play a role in beta-1,6-glucan synthesis. This chain is Mannosyl-oligosaccharide glucosidase (CWH41), found in Saccharomyces cerevisiae (strain ATCC 204508 / S288c) (Baker's yeast).